The sequence spans 500 residues: Phenylalanine--tRNA ligase alpha subunit (500 aa).

L-phenylalanine contacts are provided by residues Thr343, 382–384, and Phe423; that span reads QID. Glu425 is a binding site for Mg(2+). L-phenylalanine is bound at residue Phe448.

This sequence belongs to the class-II aminoacyl-tRNA synthetase family. Phe-tRNA synthetase alpha subunit type 2 subfamily. Tetramer of two alpha and two beta subunits. The cofactor is Mg(2+).

It localises to the cytoplasm. The catalysed reaction is tRNA(Phe) + L-phenylalanine + ATP = L-phenylalanyl-tRNA(Phe) + AMP + diphosphate + H(+). The chain is Phenylalanine--tRNA ligase alpha subunit from Pyrococcus abyssi (strain GE5 / Orsay).